A 638-amino-acid polypeptide reads, in one-letter code: Threonine--tRNA ligase (638 aa).

In terms of domain architecture, TGS spans methionine 1–threonine 61. The interval aspartate 242–proline 533 is catalytic. Cysteine 333, histidine 384, and histidine 510 together coordinate Zn(2+).

It belongs to the class-II aminoacyl-tRNA synthetase family. In terms of assembly, homodimer. The cofactor is Zn(2+).

The protein localises to the cytoplasm. It catalyses the reaction tRNA(Thr) + L-threonine + ATP = L-threonyl-tRNA(Thr) + AMP + diphosphate + H(+). Functionally, catalyzes the attachment of threonine to tRNA(Thr) in a two-step reaction: L-threonine is first activated by ATP to form Thr-AMP and then transferred to the acceptor end of tRNA(Thr). Also edits incorrectly charged L-seryl-tRNA(Thr). In Prochlorococcus marinus (strain AS9601), this protein is Threonine--tRNA ligase.